A 345-amino-acid polypeptide reads, in one-letter code: Tyrosine--tRNA ligase (345 aa).

Tyrosine 36 contacts L-tyrosine. Residues 41 to 49 (PTGEMHIGH) carry the 'HIGH' region motif. L-tyrosine is bound by residues tyrosine 163, glutamine 167, aspartate 170, and glutamine 185.

It belongs to the class-I aminoacyl-tRNA synthetase family. TyrS type 3 subfamily. As to quaternary structure, homodimer.

The protein resides in the cytoplasm. It carries out the reaction tRNA(Tyr) + L-tyrosine + ATP = L-tyrosyl-tRNA(Tyr) + AMP + diphosphate + H(+). In terms of biological role, catalyzes the attachment of tyrosine to tRNA(Tyr) in a two-step reaction: tyrosine is first activated by ATP to form Tyr-AMP and then transferred to the acceptor end of tRNA(Tyr). The chain is Tyrosine--tRNA ligase from Natronomonas pharaonis (strain ATCC 35678 / DSM 2160 / CIP 103997 / JCM 8858 / NBRC 14720 / NCIMB 2260 / Gabara) (Halobacterium pharaonis).